Here is an 81-residue protein sequence, read N- to C-terminus: Cytochrome b559 subunit alpha (81 aa).

Residues 21–35 traverse the membrane as a helical segment; sequence VIHSITIPMLFIAGW. A heme-binding site is contributed by histidine 23.

Belongs to the PsbE/PsbF family. As to quaternary structure, heterodimer of an alpha subunit and a beta subunit. PSII is composed of 1 copy each of membrane proteins PsbA, PsbB, PsbC, PsbD, PsbE, PsbF, PsbH, PsbI, PsbJ, PsbK, PsbL, PsbM, PsbT, PsbX, PsbY, PsbZ, Psb30/Ycf12, peripheral proteins PsbO, CyanoQ (PsbQ), PsbU, PsbV and a large number of cofactors. It forms dimeric complexes. Requires heme b as cofactor.

The protein localises to the cellular thylakoid membrane. This b-type cytochrome is tightly associated with the reaction center of photosystem II (PSII). PSII is a light-driven water:plastoquinone oxidoreductase that uses light energy to abstract electrons from H(2)O, generating O(2) and a proton gradient subsequently used for ATP formation. It consists of a core antenna complex that captures photons, and an electron transfer chain that converts photonic excitation into a charge separation. The chain is Cytochrome b559 subunit alpha from Picosynechococcus sp. (strain ATCC 27264 / PCC 7002 / PR-6) (Agmenellum quadruplicatum).